We begin with the raw amino-acid sequence, 402 residues long: Argininosuccinate synthase (402 aa).

8–16 (AYSGGLDTS) contacts ATP. The L-citrulline site is built by Tyr-86 and Ser-91. Gly-116 provides a ligand contact to ATP. Residues Thr-118, Asn-122, and Asp-123 each coordinate L-aspartate. Asn-122 serves as a coordination point for L-citrulline. Residues Arg-126, Ser-175, Ser-184, Glu-260, and Tyr-272 each coordinate L-citrulline.

Belongs to the argininosuccinate synthase family. Type 1 subfamily. In terms of assembly, homotetramer.

The protein resides in the cytoplasm. It catalyses the reaction L-citrulline + L-aspartate + ATP = 2-(N(omega)-L-arginino)succinate + AMP + diphosphate + H(+). Its pathway is amino-acid biosynthesis; L-arginine biosynthesis; L-arginine from L-ornithine and carbamoyl phosphate: step 2/3. This chain is Argininosuccinate synthase, found in Clostridium novyi (strain NT).